Here is a 244-residue protein sequence, read N- to C-terminus: MNIDLNADLGEGCASDSELLTLVSSANIACGFHAGDAQTMLTCVREALKNGVAIGAHPSFPDRDNFGRTAMVLPPETVYAQTLYQIGALGAIVQAQGGVMRHVKPHGMLYNQAAKDPHLAQAIAKAVHDYDPSLILVGLAGSELIRAGERHRLVTRQEVFADRGYQADGSLVPRMQPGALIHDEEQALAQTLDMVQAGRVKSVTGVWTTVTAQTVCIHGDGEYALAFARRLRAAFNARNVHVIA.

It belongs to the LamB/PxpA family. Forms a complex composed of PxpA, PxpB and PxpC.

It catalyses the reaction 5-oxo-L-proline + ATP + 2 H2O = L-glutamate + ADP + phosphate + H(+). Functionally, catalyzes the cleavage of 5-oxoproline to form L-glutamate coupled to the hydrolysis of ATP to ADP and inorganic phosphate. This Salmonella typhi protein is 5-oxoprolinase subunit A.